A 426-amino-acid polypeptide reads, in one-letter code: Serine--tRNA ligase (426 aa).

Position 233–235 (233–235) interacts with L-serine; it reads TSE. Residue 264–266 coordinates ATP; it reads RAE. An L-serine-binding site is contributed by glutamate 287. Residue 351 to 354 participates in ATP binding; that stretch reads EISS. Serine 387 is a binding site for L-serine.

The protein belongs to the class-II aminoacyl-tRNA synthetase family. Type-1 seryl-tRNA synthetase subfamily. In terms of assembly, homodimer. The tRNA molecule binds across the dimer.

It localises to the cytoplasm. It catalyses the reaction tRNA(Ser) + L-serine + ATP = L-seryl-tRNA(Ser) + AMP + diphosphate + H(+). It carries out the reaction tRNA(Sec) + L-serine + ATP = L-seryl-tRNA(Sec) + AMP + diphosphate + H(+). The protein operates within aminoacyl-tRNA biosynthesis; selenocysteinyl-tRNA(Sec) biosynthesis; L-seryl-tRNA(Sec) from L-serine and tRNA(Sec): step 1/1. In terms of biological role, catalyzes the attachment of serine to tRNA(Ser). Is also able to aminoacylate tRNA(Sec) with serine, to form the misacylated tRNA L-seryl-tRNA(Sec), which will be further converted into selenocysteinyl-tRNA(Sec). This is Serine--tRNA ligase from Stenotrophomonas maltophilia (strain K279a).